Consider the following 237-residue polypeptide: NAD-dependent protein deacylase (237 aa).

The Deacetylase sirtuin-type domain occupies 1 to 235 (MRVAVLSGAG…PGLLERLPAL (235 aa)). 8-28 (GAGISAESGVPTFRDDKNGLW) provides a ligand contact to NAD(+). Substrate-binding residues include Y53 and R56. 86 to 89 (QNVD) is an NAD(+) binding site. H104 acts as the Proton acceptor in catalysis. Zn(2+) contacts are provided by C112, C115, C138, and C140. NAD(+) is bound by residues 177-179 (GTS), 203-205 (NPE), and A221.

It belongs to the sirtuin family. Class III subfamily. Zn(2+) is required as a cofactor.

The protein resides in the cytoplasm. It carries out the reaction N(6)-acetyl-L-lysyl-[protein] + NAD(+) + H2O = 2''-O-acetyl-ADP-D-ribose + nicotinamide + L-lysyl-[protein]. It catalyses the reaction N(6)-succinyl-L-lysyl-[protein] + NAD(+) + H2O = 2''-O-succinyl-ADP-D-ribose + nicotinamide + L-lysyl-[protein]. In terms of biological role, NAD-dependent lysine deacetylase and desuccinylase that specifically removes acetyl and succinyl groups on target proteins. Modulates the activities of several proteins which are inactive in their acylated form. This is NAD-dependent protein deacylase from Mycobacterium bovis (strain ATCC BAA-935 / AF2122/97).